The chain runs to 735 residues: Catalase-peroxidase (735 aa).

The span at Met1–Thr26 shows a compositional bias: polar residues. The tract at residues Met1–Lys29 is disordered. Residues Trp100–Tyr223 constitute a cross-link (tryptophyl-tyrosyl-methioninium (Trp-Tyr) (with M-249)). The active-site Proton acceptor is the His101. Residues Tyr223–Met249 constitute a cross-link (tryptophyl-tyrosyl-methioninium (Tyr-Met) (with W-100)). A heme b-binding site is contributed by His264.

Belongs to the peroxidase family. Peroxidase/catalase subfamily. As to quaternary structure, homodimer or homotetramer. Requires heme b as cofactor. Post-translationally, formation of the three residue Trp-Tyr-Met cross-link is important for the catalase, but not the peroxidase activity of the enzyme.

It catalyses the reaction H2O2 + AH2 = A + 2 H2O. The enzyme catalyses 2 H2O2 = O2 + 2 H2O. Bifunctional enzyme with both catalase and broad-spectrum peroxidase activity. This Geobacillus thermodenitrificans (strain NG80-2) protein is Catalase-peroxidase.